The sequence spans 1097 residues: Nitric oxide synthase-like protein (1097 aa).

Position 77 (cysteine 77) interacts with heme b. 5 residues coordinate L-arginine: glutamine 140, tryptophan 249, tyrosine 250, glutamate 254, and asparagine 259. (6R)-L-erythro-5,6,7,8-tetrahydrobiopterin is bound by residues tryptophan 340 and phenylalanine 353. Tyrosine 368 provides a ligand contact to heme b. The tract at residues 387 to 410 is calmodulin-binding; that stretch reads KRPINRKFHFKQIARAVKFTSKLF. The Flavodoxin-like domain maps to 420–615; sequence ATVLYATETG…AFRKWASSVF (196 aa). FMN is bound by residues 426 to 430 and 561 to 592; these read TETGK and VFAL…ERIH. Positions 669–914 constitute an FAD-binding FR-type domain; that stretch reads KQFVSCTVKA…IRSAPNFHLP (246 aa). Residues 704 to 715 and 847 to 857 each bind FAD; these read YNPGDHVGIIAC and LQPRFYSISSS. NADP(+) is bound by residues 922–940 and 1019–1034; these read ILIG…WHHR and GAHF…AEDV.

Belongs to the NOS family. It depends on heme b as a cofactor. The cofactor is FAD. FMN serves as cofactor.

The catalysed reaction is 2 L-arginine + 3 NADPH + 4 O2 + H(+) = 2 L-citrulline + 2 nitric oxide + 3 NADP(+) + 4 H2O. In terms of biological role, produces nitric oxide (NO) which is a messenger molecule with diverse functions throughout the body. The chain is Nitric oxide synthase-like protein from Bombyx mori (Silk moth).